Here is a 44-residue protein sequence, read N- to C-terminus: Mu-conotoxin-like Cal 12.1.3b (44 aa).

Intrachain disulfides connect C3–C16, C11–C28, C18–C33, and C27–C38. The residue at position 23 (P23) is a 4-hydroxyproline. A 6'-bromotryptophan mark is found at W36 and W37. The residue at position 39 (P39) is a 4-hydroxyproline. W43 carries the 6'-bromotryptophan modification.

In terms of tissue distribution, expressed by the venom duct.

It localises to the secreted. In terms of biological role, mu-conotoxins block voltage-gated sodium channels. This toxin reversibly blocks voltage-gated sodium channel in cephalopods, with no alteration in the voltage dependence of sodium conductance or on the kinetics of inactivation. The chain is Mu-conotoxin-like Cal 12.1.3b from Californiconus californicus (California cone).